The sequence spans 159 residues: ATP synthase subunit b (159 aa).

The helical transmembrane segment at 8–28 (ILATIINFIILILILKHFFWD) threads the bilayer.

This sequence belongs to the ATPase B chain family. As to quaternary structure, F-type ATPases have 2 components, F(1) - the catalytic core - and F(0) - the membrane proton channel. F(1) has five subunits: alpha(3), beta(3), gamma(1), delta(1), epsilon(1). F(0) has three main subunits: a(1), b(2) and c(10-14). The alpha and beta chains form an alternating ring which encloses part of the gamma chain. F(1) is attached to F(0) by a central stalk formed by the gamma and epsilon chains, while a peripheral stalk is formed by the delta and b chains.

The protein resides in the cell membrane. F(1)F(0) ATP synthase produces ATP from ADP in the presence of a proton or sodium gradient. F-type ATPases consist of two structural domains, F(1) containing the extramembraneous catalytic core and F(0) containing the membrane proton channel, linked together by a central stalk and a peripheral stalk. During catalysis, ATP synthesis in the catalytic domain of F(1) is coupled via a rotary mechanism of the central stalk subunits to proton translocation. Functionally, component of the F(0) channel, it forms part of the peripheral stalk, linking F(1) to F(0). The chain is ATP synthase subunit b from Clostridium perfringens (strain ATCC 13124 / DSM 756 / JCM 1290 / NCIMB 6125 / NCTC 8237 / Type A).